The following is a 164-amino-acid chain: Interleukin-36 beta (164 aa).

Positions Met1–Gln4 are excised as a propeptide.

The protein belongs to the IL-1 family. As to quaternary structure, interacts with cargo receptor TMED10; the interaction mediates the translocation from the cytoplasm into the ERGIC (endoplasmic reticulum-Golgi intermediate compartment) and thereby secretion. Post-translationally, N-terminal truncation leads to a dramatic enhancement of its activity (&gt;1000-fold). Expression at low levels in tonsil, bone marrow, heart, placenta, lung, testis and colon but not in any hematopoietic cell lines. Not detected in adipose tissue. Expressed at higher levels in psoriatic plaques than in symptomless psoriatic skin or healthy control skin. Increased levels are not detected in inflamed joint tissue.

It localises to the cytoplasm. The protein resides in the secreted. Functionally, cytokine that binds to and signals through the IL1RL2/IL-36R receptor which in turn activates NF-kappa-B and MAPK signaling pathways in target cells linked to a pro-inflammatory response. Part of the IL-36 signaling system that is thought to be present in epithelial barriers and to take part in local inflammatory response; similar to the IL-1 system with which it shares the coreceptor IL1RAP. Stimulates production of interleukin-6 and interleukin-8 in synovial fibrobasts, articular chondrocytes and mature adipocytes. Induces expression of a number of antimicrobial peptides including beta-defensins 4 and 103 as well as a number of matrix metalloproteases. Seems to be involved in skin inflammatory response by acting on keratinocytes, dendritic cells and indirectly on T-cells to drive tissue infiltration, cell maturation and cell proliferation. In cultured keratinocytes induces the expression of macrophage, T-cell, and neutrophil chemokines, such as CCL3, CCL4, CCL5, CCL2, CCL17, CCL22, CL20, CCL5, CCL2, CCL17, CCL22, CXCL8, CCL20 and CXCL1, and the production of pro-inflammatory cytokines such as TNF-alpha, IL-8 and IL-6. This is Interleukin-36 beta from Homo sapiens (Human).